The following is a 559-amino-acid chain: DNA ligase (559 aa).

Residue Glu248 coordinates ATP. Lys250 (N6-AMP-lysine intermediate) is an active-site residue. Positions 255, 270, 300, 341, 417, and 423 each coordinate ATP.

The protein belongs to the ATP-dependent DNA ligase family. Mg(2+) is required as a cofactor.

The enzyme catalyses ATP + (deoxyribonucleotide)n-3'-hydroxyl + 5'-phospho-(deoxyribonucleotide)m = (deoxyribonucleotide)n+m + AMP + diphosphate.. In terms of biological role, DNA ligase that seals nicks in double-stranded DNA during DNA replication, DNA recombination and DNA repair. The sequence is that of DNA ligase from Methanopyrus kandleri (strain AV19 / DSM 6324 / JCM 9639 / NBRC 100938).